The following is a 475-amino-acid chain: Membrane-bound lytic murein transglycosylase F (475 aa).

The N-terminal stretch at 1 to 15 is a signal peptide; that stretch reads MKKLLLILCCITLLA. Residues 16 to 258 form a non-LT domain region; sequence ACQKVVVEQE…HLNEKYFAHV (243 aa). The segment at 259–475 is LT domain; that stretch reads KRFDYVDTRA…KTEAAQPQQP (217 aa). E303 is an active-site residue.

It in the N-terminal section; belongs to the bacterial solute-binding protein 3 family. The protein in the C-terminal section; belongs to the transglycosylase Slt family.

Its subcellular location is the cell outer membrane. The catalysed reaction is Exolytic cleavage of the (1-&gt;4)-beta-glycosidic linkage between N-acetylmuramic acid (MurNAc) and N-acetylglucosamine (GlcNAc) residues in peptidoglycan, from either the reducing or the non-reducing ends of the peptidoglycan chains, with concomitant formation of a 1,6-anhydrobond in the MurNAc residue.. Its function is as follows. Murein-degrading enzyme that degrades murein glycan strands and insoluble, high-molecular weight murein sacculi, with the concomitant formation of a 1,6-anhydromuramoyl product. Lytic transglycosylases (LTs) play an integral role in the metabolism of the peptidoglycan (PG) sacculus. Their lytic action creates space within the PG sacculus to allow for its expansion as well as for the insertion of various structures such as secretion systems and flagella. This is Membrane-bound lytic murein transglycosylase F from Shewanella halifaxensis (strain HAW-EB4).